The following is a 483-amino-acid chain: E3 ubiquitin-protein ligase TRIM50 (483 aa).

An RING-type zinc finger spans residues 16-57 (CPICLEVFKEPLMLQCGHSYCKDCLDNLSQHLDSELCCPVCR). The B box-type zinc finger occupies 84–125 (IEPTVCVHHRNPLSLFCEKDQEFICGLCGLLGSHQHHRVTPV). Zn(2+) is bound by residues cysteine 89, histidine 92, cysteine 111, and histidine 117. Coiled coils occupy residues 127–169 (TVYS…NESD) and 203–236 (GLVA…GNES). One can recognise a B30.2/SPRY domain in the interval 275-474 (DIKLTVWKRL…LPMVLPPPSG (200 aa)). Lysine 372 bears the N6-acetyllysine mark.

The protein belongs to the TRIM/RBCC family. Can form dimers and trimers. Interacts with several E2 ubiquitin-conjugating enzymes, including UBE2L6, UBE2E1, UBE2E3. No interaction with UBE2H. Interacts with BECN1. Interacts with SQSTM1. Interacts with NLRP3. Auto-ubiquitinated. In terms of processing, acetylated by EP300 and KAT2B. HDAC6 drives TRIM50 deacetylation. Acetylation antagonizes with TRIM50 ubiquitination. As to expression, expressed in the stomach.

It is found in the cytoplasm. It catalyses the reaction S-ubiquitinyl-[E2 ubiquitin-conjugating enzyme]-L-cysteine + [acceptor protein]-L-lysine = [E2 ubiquitin-conjugating enzyme]-L-cysteine + N(6)-ubiquitinyl-[acceptor protein]-L-lysine.. E3 ubiquitin-protein ligase that ubiquitinates Beclin-1/BECN1 in a 'Lys-63'-dependent manner enhancing its binding to ULK1. In turn, promotes starvation-induced autophagy activation. Also interacts with p62/SQSTM1 protein and thereby induces the formation and the autophagy clearance of aggresome-associated polyubiquitinated proteins through HDAC6 interaction. Also promotes NLRP3 inflammasome activation by directly inducing NLRP3 oligomerization independent of its E3 ligase function. The polypeptide is E3 ubiquitin-protein ligase TRIM50 (Trim50) (Mus musculus (Mouse)).